We begin with the raw amino-acid sequence, 357 residues long: Holliday junction branch migration complex subunit RuvB (357 aa).

Over residues 1–10 the composition is skewed to polar residues; the sequence is MAIQSDSLSS. The tract at residues 1-30 is disordered; the sequence is MAIQSDSLSSRPDAPRLVAPAPASPNEESI. The segment at 5-195 is large ATPase domain (RuvB-L); the sequence is SDSLSSRPDA…FGIVSRLEFY (191 aa). Residues leucine 34, arginine 35, glycine 76, lysine 79, threonine 80, threonine 81, 142-144, arginine 185, tyrosine 195, and arginine 232 each bind ATP; that span reads EDF. Threonine 80 provides a ligand contact to Mg(2+). Residues 196–266 form a small ATPAse domain (RuvB-S) region; it reads NTDDLAHIVT…AANQALAMLE (71 aa). The interval 269 to 357 is head domain (RuvB-H); it reads PQGLDLMDRK…QPSSGDLFGA (89 aa). Arginine 305, arginine 324, and arginine 329 together coordinate DNA.

It belongs to the RuvB family. Homohexamer. Forms an RuvA(8)-RuvB(12)-Holliday junction (HJ) complex. HJ DNA is sandwiched between 2 RuvA tetramers; dsDNA enters through RuvA and exits via RuvB. An RuvB hexamer assembles on each DNA strand where it exits the tetramer. Each RuvB hexamer is contacted by two RuvA subunits (via domain III) on 2 adjacent RuvB subunits; this complex drives branch migration. In the full resolvosome a probable DNA-RuvA(4)-RuvB(12)-RuvC(2) complex forms which resolves the HJ.

The protein resides in the cytoplasm. It carries out the reaction ATP + H2O = ADP + phosphate + H(+). Its function is as follows. The RuvA-RuvB-RuvC complex processes Holliday junction (HJ) DNA during genetic recombination and DNA repair, while the RuvA-RuvB complex plays an important role in the rescue of blocked DNA replication forks via replication fork reversal (RFR). RuvA specifically binds to HJ cruciform DNA, conferring on it an open structure. The RuvB hexamer acts as an ATP-dependent pump, pulling dsDNA into and through the RuvAB complex. RuvB forms 2 homohexamers on either side of HJ DNA bound by 1 or 2 RuvA tetramers; 4 subunits per hexamer contact DNA at a time. Coordinated motions by a converter formed by DNA-disengaged RuvB subunits stimulates ATP hydrolysis and nucleotide exchange. Immobilization of the converter enables RuvB to convert the ATP-contained energy into a lever motion, pulling 2 nucleotides of DNA out of the RuvA tetramer per ATP hydrolyzed, thus driving DNA branch migration. The RuvB motors rotate together with the DNA substrate, which together with the progressing nucleotide cycle form the mechanistic basis for DNA recombination by continuous HJ branch migration. Branch migration allows RuvC to scan DNA until it finds its consensus sequence, where it cleaves and resolves cruciform DNA. This Bordetella avium (strain 197N) protein is Holliday junction branch migration complex subunit RuvB.